The sequence spans 258 residues: Ciliogenesis and planar polarity effector 2 (258 aa).

A small GTPase-like region spans residues 50 to 258 (SIDTASYKIF…LPNPPESAPE (209 aa)). The GTP site is built by S64, G65, G67, K68, T69, A70, V82, H84, T87, K176, D178, and S206.

It belongs to the small GTPase superfamily. Rab family. As to quaternary structure, interacts with FUZ. Associates with the CPLANE (ciliogenesis and planar polarity effectors) complex via its interaction with FUZ.

It is found in the cytoplasm. Its subcellular location is the cytoskeleton. The protein resides in the cilium basal body. It localises to the microtubule organizing center. The protein localises to the centrosome. It is found in the centriole. Functionally, required for efficient primary cilia initiation, regulating a late step in cilia initiation. Plays a role in the final maturation of the mother centriole and ciliary vesicle that allows extension of the ciliary axoneme. The chain is Ciliogenesis and planar polarity effector 2 from Homo sapiens (Human).